A 151-amino-acid chain; its full sequence is Large-conductance mechanosensitive channel (151 aa).

Helical transmembrane passes span glycine 12–threonine 32 and valine 71–valine 91. Positions alanine 122–glutamine 151 are disordered.

This sequence belongs to the MscL family. As to quaternary structure, homopentamer.

Its subcellular location is the cell membrane. Functionally, channel that opens in response to stretch forces in the membrane lipid bilayer. May participate in the regulation of osmotic pressure changes within the cell. The chain is Large-conductance mechanosensitive channel from Mycobacterium bovis (strain BCG / Pasteur 1173P2).